A 186-amino-acid polypeptide reads, in one-letter code: Pterocarpan synthase 1 (186 aa).

Positions 1–21 are cleaved as a signal peptide; it reads MAKSTFFVCLNLSLLFSLVTA. A glycan (N-linked (GlcNAc...) asparagine) is linked at Asn-125.

Belongs to the plant dirigent protein family. In terms of assembly, homodimer.

The protein resides in the secreted. It is found in the extracellular space. The protein localises to the apoplast. It carries out the reaction a (4R)-4,2'-dihydroxyisoflavan = a pterocarpan + H2O.. It catalyses the reaction (3R,4R)-7,2'-dihydroxy-4'-methoxyisoflavanol = (-)-medicarpin + H2O. The enzyme catalyses (3R,4R)-3-(6-hydroxy-1,3-benzodioxol-5-yl)-3,4-dihydro-2H-chromene-4,7-diol = (-)-maackiain + H2O. The catalysed reaction is (3S,4R)-7,2'-dihydroxy-4'-methoxyisoflavanol = (+)-medicarpin + H2O. It carries out the reaction (3R,4R)-7,2',4'-trihydroxyisoflavanol = (6aR,11aR)-3,9-dihydroxypterocarpan + H2O. Its function is as follows. Involved in pterocarpan phytoalexin biosynthesis. Catalyzes the last step in the biosynthesis of the phytoalexin medicarpin, and thereby contributes to plant defense reactions. Dirigent proteins impart stereoselectivity on the phenoxy radical-coupling reaction, yielding optically active lignans from two molecules of coniferyl alcohol in the biosynthesis of lignans, flavonolignans, and alkaloids and thus plays a central role in plant secondary metabolism. This is Pterocarpan synthase 1 from Glycine max (Soybean).